We begin with the raw amino-acid sequence, 99 residues long: Secreted RxLR effector protein 94 (99 aa).

The RxLR-dEER signature appears at Arg35 to Arg55.

This sequence belongs to the RxLR effector family.

Its subcellular location is the secreted. The protein localises to the host nucleus. It is found in the host cytoplasm. In terms of biological role, secreted effector that completely suppresses the host cell death induced by cell death-inducing proteins. This Plasmopara viticola (Downy mildew of grapevine) protein is Secreted RxLR effector protein 94.